A 521-amino-acid chain; its full sequence is Bifunctional purine biosynthesis protein PurH (521 aa).

Residues 1–145 enclose the MGS-like domain; it reads MIKQALISVS…KNHRDVTVVV (145 aa).

The protein belongs to the PurH family.

The enzyme catalyses (6R)-10-formyltetrahydrofolate + 5-amino-1-(5-phospho-beta-D-ribosyl)imidazole-4-carboxamide = 5-formamido-1-(5-phospho-D-ribosyl)imidazole-4-carboxamide + (6S)-5,6,7,8-tetrahydrofolate. It catalyses the reaction IMP + H2O = 5-formamido-1-(5-phospho-D-ribosyl)imidazole-4-carboxamide. It participates in purine metabolism; IMP biosynthesis via de novo pathway; 5-formamido-1-(5-phospho-D-ribosyl)imidazole-4-carboxamide from 5-amino-1-(5-phospho-D-ribosyl)imidazole-4-carboxamide (10-formyl THF route): step 1/1. Its pathway is purine metabolism; IMP biosynthesis via de novo pathway; IMP from 5-formamido-1-(5-phospho-D-ribosyl)imidazole-4-carboxamide: step 1/1. This Burkholderia orbicola (strain MC0-3) protein is Bifunctional purine biosynthesis protein PurH.